Consider the following 417-residue polypeptide: Riboflavin biosynthesis protein RibBA (417 aa).

Positions 1–204 (MTRFDSIERA…IADLIAWRRK (204 aa)) are DHBP synthase. Residues 28-29 (RE), D33, 141-145 (RPGHT), and E165 contribute to the D-ribulose 5-phosphate site. Residue E29 participates in Mg(2+) binding. H144 contacts Mg(2+). The tract at residues 205 to 417 (HEKHVERVAS…LDDFEAGEML (213 aa)) is GTP cyclohydrolase II. Residue 259-263 (RVHSE) participates in GTP binding. Residues C264, C275, and C277 each contribute to the Zn(2+) site. Residues Q280, 303-305 (EGR), and T325 each bind GTP. D337 functions as the Proton acceptor; for GTP cyclohydrolase activity in the catalytic mechanism. R339 serves as the catalytic Nucleophile; for GTP cyclohydrolase activity. Residues T360 and K365 each coordinate GTP.

This sequence in the N-terminal section; belongs to the DHBP synthase family. The protein in the C-terminal section; belongs to the GTP cyclohydrolase II family. Mg(2+) serves as cofactor. It depends on Mn(2+) as a cofactor. Requires Zn(2+) as cofactor.

The enzyme catalyses D-ribulose 5-phosphate = (2S)-2-hydroxy-3-oxobutyl phosphate + formate + H(+). It carries out the reaction GTP + 4 H2O = 2,5-diamino-6-hydroxy-4-(5-phosphoribosylamino)-pyrimidine + formate + 2 phosphate + 3 H(+). It participates in cofactor biosynthesis; riboflavin biosynthesis; 2-hydroxy-3-oxobutyl phosphate from D-ribulose 5-phosphate: step 1/1. The protein operates within cofactor biosynthesis; riboflavin biosynthesis; 5-amino-6-(D-ribitylamino)uracil from GTP: step 1/4. In terms of biological role, catalyzes the conversion of D-ribulose 5-phosphate to formate and 3,4-dihydroxy-2-butanone 4-phosphate. Its function is as follows. Catalyzes the conversion of GTP to 2,5-diamino-6-ribosylamino-4(3H)-pyrimidinone 5'-phosphate (DARP), formate and pyrophosphate. This Rhodococcus jostii (strain RHA1) protein is Riboflavin biosynthesis protein RibBA.